The sequence spans 61 residues: Photosystem II reaction center protein K (61 aa).

Positions 1–24 are excised as a propeptide; that stretch reads MPNILSLTCICFNSVIYPTSFFFA. Residues 32 to 52 traverse the membrane as a helical segment; sequence IFNPIVDFMPVIPLFFFLLAF.

This sequence belongs to the PsbK family. As to quaternary structure, PSII is composed of 1 copy each of membrane proteins PsbA, PsbB, PsbC, PsbD, PsbE, PsbF, PsbH, PsbI, PsbJ, PsbK, PsbL, PsbM, PsbT, PsbX, PsbY, PsbZ, Psb30/Ycf12, at least 3 peripheral proteins of the oxygen-evolving complex and a large number of cofactors. It forms dimeric complexes.

Its subcellular location is the plastid. The protein resides in the chloroplast thylakoid membrane. Its function is as follows. One of the components of the core complex of photosystem II (PSII). PSII is a light-driven water:plastoquinone oxidoreductase that uses light energy to abstract electrons from H(2)O, generating O(2) and a proton gradient subsequently used for ATP formation. It consists of a core antenna complex that captures photons, and an electron transfer chain that converts photonic excitation into a charge separation. This chain is Photosystem II reaction center protein K, found in Triticum aestivum (Wheat).